The chain runs to 387 residues: Cytochrome b (387 aa).

The next 4 helical transmembrane spans lie at 32-52 (FGSL…LLAC), 76-98 (FLLR…LHIG), 113-133 (TWNI…LGYC), and 179-199 (FFSL…MHLI). Heme b is bound by residues His82 and His96. The heme b site is built by His183 and His197. His202 provides a ligand contact to a ubiquinone. 4 consecutive transmembrane segments (helical) span residues 225 to 245 (YLIK…YMAF), 289 to 309 (QLGV…PLLD), 321 to 341 (FGKF…WIGG), and 348 to 368 (FITI…ILIP).

The protein belongs to the cytochrome b family. In terms of assembly, fungal cytochrome b-c1 complex contains 10 subunits; 3 respiratory subunits, 2 core proteins and 5 low-molecular weight proteins. Cytochrome b-c1 complex is a homodimer. Heme b is required as a cofactor.

It is found in the mitochondrion inner membrane. Functionally, component of the ubiquinol-cytochrome c reductase complex (complex III or cytochrome b-c1 complex) that is part of the mitochondrial respiratory chain. The b-c1 complex mediates electron transfer from ubiquinol to cytochrome c. Contributes to the generation of a proton gradient across the mitochondrial membrane that is then used for ATP synthesis. The chain is Cytochrome b (cob) from Schizosaccharomyces pombe (strain 972 / ATCC 24843) (Fission yeast).